Here is a 487-residue protein sequence, read N- to C-terminus: NGFI-A-binding protein 1 (487 aa).

Residues 4-82 (ALPRTLGELQ…RDWVTNPGLF (79 aa)) are NCD1. Residues Lys-126, Lys-129, and Lys-143 each participate in a glycyl lysine isopeptide (Lys-Gly) (interchain with G-Cter in SUMO2) cross-link. The disordered stretch occupies residues 162–188 (QGHHATESEHSLSPADLGSPASPKESS). A phosphoserine mark is found at Ser-172 and Ser-183. A Glycyl lysine isopeptide (Lys-Gly) (interchain with G-Cter in SUMO2) cross-link involves residue Lys-212. Positions 221 to 310 (LLKTNKKLAK…ARQISREVTY (90 aa)) are NCD2. Positions 307 to 338 (EVTYKYTYRTTKSKCGERDELSPKRIKVEDGF) are necessary for nuclear localization. Phosphoserine is present on Ser-328. Lys-333 participates in a covalent cross-link: Glycyl lysine isopeptide (Lys-Gly) (interchain with G-Cter in SUMO1); alternate. A Glycyl lysine isopeptide (Lys-Gly) (interchain with G-Cter in SUMO2); alternate cross-link involves residue Lys-333. Glycyl lysine isopeptide (Lys-Gly) (interchain with G-Cter in SUMO2) cross-links involve residues Lys-355, Lys-369, and Lys-373. The interval 399–434 (YRQSSEEHSPNGLTSDNSDGQGERPLNLRMPNLQNR) is disordered. Phosphoserine is present on Ser-407. Over residues 409-418 (NGLTSDNSDG) the composition is skewed to polar residues. Glycyl lysine isopeptide (Lys-Gly) (interchain with G-Cter in SUMO2) cross-links involve residues Lys-454, Lys-465, and Lys-477. Lys-480 participates in a covalent cross-link: Glycyl lysine isopeptide (Lys-Gly) (interchain with G-Cter in SUMO1); alternate. A Glycyl lysine isopeptide (Lys-Gly) (interchain with G-Cter in SUMO2); alternate cross-link involves residue Lys-480.

The protein belongs to the NAB family. As to quaternary structure, homomultimers may associate with EGR1 bound to DNA. Isoform Short is found in myeloid leukemia cell line KG-1.

Its subcellular location is the nucleus. Functionally, acts as a transcriptional repressor for zinc finger transcription factors EGR1 and EGR2. This is NGFI-A-binding protein 1 (NAB1) from Homo sapiens (Human).